The chain runs to 413 residues: Glucose-1-phosphate adenylyltransferase (413 aa).

Alpha-D-glucose 1-phosphate-binding positions include Y102, G167, 182–183 (EK), and S200.

This sequence belongs to the bacterial/plant glucose-1-phosphate adenylyltransferase family. As to quaternary structure, homotetramer.

It carries out the reaction alpha-D-glucose 1-phosphate + ATP + H(+) = ADP-alpha-D-glucose + diphosphate. It functions in the pathway glycan biosynthesis; glycogen biosynthesis. In terms of biological role, involved in the biosynthesis of ADP-glucose, a building block required for the elongation reactions to produce glycogen. Catalyzes the reaction between ATP and alpha-D-glucose 1-phosphate (G1P) to produce pyrophosphate and ADP-Glc. The sequence is that of Glucose-1-phosphate adenylyltransferase from Deinococcus geothermalis (strain DSM 11300 / CIP 105573 / AG-3a).